The following is a 361-amino-acid chain: Phosphoserine aminotransferase (361 aa).

Arg43 lines the L-glutamate pocket. Residues 77 to 78 (AS), Trp103, Thr153, Asp173, and Gln196 contribute to the pyridoxal 5'-phosphate site. The residue at position 197 (Lys197) is an N6-(pyridoxal phosphate)lysine. 238 to 239 (NT) lines the pyridoxal 5'-phosphate pocket.

Belongs to the class-V pyridoxal-phosphate-dependent aminotransferase family. SerC subfamily. In terms of assembly, homodimer. It depends on pyridoxal 5'-phosphate as a cofactor.

The protein resides in the cytoplasm. It carries out the reaction O-phospho-L-serine + 2-oxoglutarate = 3-phosphooxypyruvate + L-glutamate. It catalyses the reaction 4-(phosphooxy)-L-threonine + 2-oxoglutarate = (R)-3-hydroxy-2-oxo-4-phosphooxybutanoate + L-glutamate. It functions in the pathway amino-acid biosynthesis; L-serine biosynthesis; L-serine from 3-phospho-D-glycerate: step 2/3. It participates in cofactor biosynthesis; pyridoxine 5'-phosphate biosynthesis; pyridoxine 5'-phosphate from D-erythrose 4-phosphate: step 3/5. Functionally, catalyzes the reversible conversion of 3-phosphohydroxypyruvate to phosphoserine and of 3-hydroxy-2-oxo-4-phosphonooxybutanoate to phosphohydroxythreonine. The sequence is that of Phosphoserine aminotransferase from Pseudomonas aeruginosa (strain LESB58).